The sequence spans 396 residues: Glycerate kinase (396 aa).

It belongs to the glycerate kinase type-2 family.

It is found in the cytoplasm. It catalyses the reaction (R)-glycerate + ATP = (2R)-3-phosphoglycerate + ADP + H(+). The protein is Glycerate kinase (GLYCTK) of Macaca fascicularis (Crab-eating macaque).